Reading from the N-terminus, the 830-residue chain is Ribosome biogenesis protein ERB1 (830 aa).

Residues methionine 1–lysine 141 form a disordered region. Composition is skewed to acidic residues over residues valine 35–glycine 44 and methionine 52–serine 109. A compositionally biased stretch (basic and acidic residues) spans glutamate 131–lysine 141. 6 WD repeats span residues proline 481–arginine 520, leucine 523–isoleucine 563, lysine 660–threonine 698, serine 701–lysine 740, tyrosine 744–glutamine 783, and isoleucine 799–serine 830.

This sequence belongs to the WD repeat BOP1/ERB1 family. In terms of assembly, component of the NOP7 complex, composed of ERB1, NOP7 and YTM1. The complex is held together by ERB1, which interacts with NOP7 via its N-terminal domain and with YTM1 via a high-affinity interaction between the seven-bladed beta-propeller domains of the 2 proteins. The NOP7 complex associates with the 66S pre-ribosome.

The protein resides in the nucleus. Its subcellular location is the nucleolus. The protein localises to the nucleoplasm. In terms of biological role, component of the NOP7 complex, which is required for maturation of the 25S and 5.8S ribosomal RNAs and formation of the 60S ribosome. The protein is Ribosome biogenesis protein ERB1 of Cryptococcus neoformans var. neoformans serotype D (strain B-3501A) (Filobasidiella neoformans).